Here is a 241-residue protein sequence, read N- to C-terminus: Translation initiation factor IF-3 (241 aa).

Positions 178–241 (KKTEAMAEAR…EAPAEASTEA (64 aa)) are disordered. Basic and acidic residues predominate over residues 180–197 (TEAMAEAREAQAARKAEA). Positions 208–229 (ADEDIPEGELPEGEVPEAETTE) are enriched in acidic residues. Low complexity predominate over residues 230–241 (AAEAPAEASTEA).

The protein belongs to the IF-3 family. In terms of assembly, monomer.

The protein localises to the cytoplasm. Functionally, IF-3 binds to the 30S ribosomal subunit and shifts the equilibrium between 70S ribosomes and their 50S and 30S subunits in favor of the free subunits, thus enhancing the availability of 30S subunits on which protein synthesis initiation begins. The chain is Translation initiation factor IF-3 from Streptomyces avermitilis (strain ATCC 31267 / DSM 46492 / JCM 5070 / NBRC 14893 / NCIMB 12804 / NRRL 8165 / MA-4680).